Here is a 602-residue protein sequence, read N- to C-terminus: Basic-leucine zipper transcription factor B (602 aa).

Over residues 1-10 (MNQFYQSTTG) the composition is skewed to polar residues. The tract at residues 1–128 (MNQFYQSTTG…NRVNQNLASR (128 aa)) is disordered. Low complexity-rich tracts occupy residues 11–54 (GQQN…TSTS) and 66–102 (QQQI…YNGD). Residues 58-94 (KNKDNQSKQQQIQQQQIQQQQQQQQQQQQQIQQQSVD) are a coiled coil. The bZIP domain maps to 113–176 (ENKKNRNRVN…GVEIMKPDPA (64 aa)). The segment at 115 to 135 (KKNRNRVNQNLASRNYRQRKK) is basic motif. The tract at residues 138-145 (IKEIEEKL) is leucine-zipper. Disordered stretches follow at residues 328–401 (TNLS…QNNN) and 525–602 (QNQT…PSRQ). Composition is skewed to low complexity over residues 336–350 (PNPT…TQST), 358–401 (LTLL…QNNN), and 525–592 (QNQT…SSPY). The stretch at 509-552 (TFSQQTQQLQQAQLQLQNQTKQQQQQLQNNNNNNNNNNNNNNSF) forms a coiled coil. Residues 593–602 (NHHQQQPSRQ) show a composition bias toward polar residues.

Belongs to the bZIP family. As to quaternary structure, binds DNA as a dimer. Heterodimerizes with dimA; in vitro. Also able to form homodimer; in vitro.

It is found in the nucleus. In terms of biological role, transcriptional regulator involved in DIF-1 signaling. DIF-1 (Differentiation Inducing Factor-1) is a signal molecule involved in the differentiation of pstO (prestalk-O) cells. May be a direct activator of ecmA. The protein is Basic-leucine zipper transcription factor B (dimB) of Dictyostelium discoideum (Social amoeba).